The sequence spans 181 residues: ATP-dependent protease subunit HslV (181 aa).

Thr-9 is a catalytic residue. Na(+) contacts are provided by Ala-166, Cys-169, and Thr-172.

Belongs to the peptidase T1B family. HslV subfamily. As to quaternary structure, a double ring-shaped homohexamer of HslV is capped on each side by a ring-shaped HslU homohexamer. The assembly of the HslU/HslV complex is dependent on binding of ATP.

The protein localises to the cytoplasm. It carries out the reaction ATP-dependent cleavage of peptide bonds with broad specificity.. Its activity is regulated as follows. Allosterically activated by HslU binding. In terms of biological role, protease subunit of a proteasome-like degradation complex believed to be a general protein degrading machinery. This chain is ATP-dependent protease subunit HslV, found in Staphylococcus aureus (strain JH1).